The following is a 454-amino-acid chain: tRNA modification GTPase MnmE (454 aa).

(6S)-5-formyl-5,6,7,8-tetrahydrofolate contacts are provided by R23, E80, and K120. A TrmE-type G domain is found at 216–377 (GMKVVIAGRP…LRNHLKQSMG (162 aa)). N226 is a K(+) binding site. GTP-binding positions include 226–231 (NAGKSS), 245–251 (TDIAGTT), 270–273 (DTAG), 335–338 (NKAD), and 358–360 (SAR). S230 provides a ligand contact to Mg(2+). Residues T245, I247, and T250 each contribute to the K(+) site. T251 contacts Mg(2+). A (6S)-5-formyl-5,6,7,8-tetrahydrofolate-binding site is contributed by K454.

This sequence belongs to the TRAFAC class TrmE-Era-EngA-EngB-Septin-like GTPase superfamily. TrmE GTPase family. Homodimer. Heterotetramer of two MnmE and two MnmG subunits. K(+) serves as cofactor.

The protein resides in the cytoplasm. Its function is as follows. Exhibits a very high intrinsic GTPase hydrolysis rate. Involved in the addition of a carboxymethylaminomethyl (cmnm) group at the wobble position (U34) of certain tRNAs, forming tRNA-cmnm(5)s(2)U34. The sequence is that of tRNA modification GTPase MnmE from Salmonella paratyphi C (strain RKS4594).